The primary structure comprises 485 residues: Cobyric acid synthase (485 aa).

The GATase cobBQ-type domain maps to 248–435 (RLKVAVAVPP…LHGLFESPAA (188 aa)). Cys329 (nucleophile) is an active-site residue. The active site involves His427.

The protein belongs to the CobB/CobQ family. CobQ subfamily.

It participates in cofactor biosynthesis; adenosylcobalamin biosynthesis. In terms of biological role, catalyzes amidations at positions B, D, E, and G on adenosylcobyrinic A,C-diamide. NH(2) groups are provided by glutamine, and one molecule of ATP is hydrogenolyzed for each amidation. This chain is Cobyric acid synthase, found in Azotobacter vinelandii (strain DJ / ATCC BAA-1303).